The following is a 624-amino-acid chain: Probable potassium transport system protein Kup 1 (624 aa).

12 consecutive transmembrane segments (helical) span residues 10-30 (LALG…LYAL), 48-68 (LSLI…MIIF), 94-114 (PVFY…GMLT), 133-153 (LYPY…SLQA), 159-179 (IGYL…ILGI), 210-230 (FLLG…ADIG), 242-262 (FFIA…NLIV), 270-290 (PFFM…ATVA), 331-351 (IYVP…CLAF), 363-383 (IAVN…AVSI), 388-408 (TFNV…FLGA), and 413-433 (FITG…IMYS).

The protein belongs to the HAK/KUP transporter (TC 2.A.72) family.

The protein localises to the cell inner membrane. The enzyme catalyses K(+)(in) + H(+)(in) = K(+)(out) + H(+)(out). Its function is as follows. Transport of potassium into the cell. Likely operates as a K(+):H(+) symporter. This is Probable potassium transport system protein Kup 1 from Legionella pneumophila (strain Paris).